Reading from the N-terminus, the 254-residue chain is Type III pantothenate kinase (254 aa).

Residue 13-20 (MIGNTRQH) coordinates ATP. Substrate-binding positions include Y84 and 88–91 (GLDR). D90 serves as the catalytic Proton acceptor. A K(+)-binding site is contributed by D110. Residue T113 participates in ATP binding. A substrate-binding site is contributed by T166.

The protein belongs to the type III pantothenate kinase family. Homodimer. NH4(+) serves as cofactor. The cofactor is K(+).

Its subcellular location is the cytoplasm. It carries out the reaction (R)-pantothenate + ATP = (R)-4'-phosphopantothenate + ADP + H(+). Its pathway is cofactor biosynthesis; coenzyme A biosynthesis; CoA from (R)-pantothenate: step 1/5. Catalyzes the phosphorylation of pantothenate (Pan), the first step in CoA biosynthesis. The protein is Type III pantothenate kinase of Thermosynechococcus vestitus (strain NIES-2133 / IAM M-273 / BP-1).